A 92-amino-acid polypeptide reads, in one-letter code: YcgL domain-containing protein VC0395_A1544/VC395_2072 (92 aa).

A YcgL domain is found at 1 to 84 (MLCSIYKSPK…PPENLLEQHK (84 aa)). The segment at 71 to 92 (QLPPPPENLLEQHKERKARQTP) is disordered.

The protein is YcgL domain-containing protein VC0395_A1544/VC395_2072 of Vibrio cholerae serotype O1 (strain ATCC 39541 / Classical Ogawa 395 / O395).